The sequence spans 238 residues: Urease accessory protein UreF (238 aa).

The protein belongs to the UreF family. UreD, UreF and UreG form a complex that acts as a GTP-hydrolysis-dependent molecular chaperone, activating the urease apoprotein by helping to assemble the nickel containing metallocenter of UreC. The UreE protein probably delivers the nickel.

It is found in the cytoplasm. Required for maturation of urease via the functional incorporation of the urease nickel metallocenter. This chain is Urease accessory protein UreF, found in Delftia acidovorans (strain DSM 14801 / SPH-1).